The sequence spans 62 residues: Photosystem II reaction center protein Z (62 aa).

2 helical membrane passes run 8 to 28 (SVFA…VVLA) and 41 to 61 (FSGA…NSFI).

This sequence belongs to the PsbZ family. PSII is composed of 1 copy each of membrane proteins PsbA, PsbB, PsbC, PsbD, PsbE, PsbF, PsbH, PsbI, PsbJ, PsbK, PsbL, PsbM, PsbT, PsbY, PsbZ, Psb30/Ycf12, at least 3 peripheral proteins of the oxygen-evolving complex and a large number of cofactors. It forms dimeric complexes.

It localises to the plastid. The protein localises to the chloroplast thylakoid membrane. Its function is as follows. May control the interaction of photosystem II (PSII) cores with the light-harvesting antenna, regulates electron flow through the 2 photosystem reaction centers. PSII is a light-driven water plastoquinone oxidoreductase, using light energy to abstract electrons from H(2)O, generating a proton gradient subsequently used for ATP formation. The protein is Photosystem II reaction center protein Z of Staurastrum punctulatum (Green alga).